The primary structure comprises 208 residues: Ribosomal RNA small subunit methyltransferase G (208 aa).

S-adenosyl-L-methionine contacts are provided by residues glycine 74, leucine 79, 125–126 (VE), and arginine 140.

It belongs to the methyltransferase superfamily. RNA methyltransferase RsmG family.

The protein localises to the cytoplasm. The catalysed reaction is guanosine(527) in 16S rRNA + S-adenosyl-L-methionine = N(7)-methylguanosine(527) in 16S rRNA + S-adenosyl-L-homocysteine. Its function is as follows. Specifically methylates the N7 position of guanine in position 527 of 16S rRNA. The protein is Ribosomal RNA small subunit methyltransferase G of Shewanella denitrificans (strain OS217 / ATCC BAA-1090 / DSM 15013).